The following is a 390-amino-acid chain: Pyruvate dehydrogenase E1 component subunit alpha, somatic form, mitochondrial (390 aa).

Residues 1–29 constitute a mitochondrion transit peptide; it reads MRKMLAAVSRVLSGASQKPASRVLVASRN. Residue Lys-63 is modified to N6-acetyllysine; alternate. Lys-63 is subject to N6-succinyllysine; alternate. Residues His-92, Tyr-118, Arg-119, Ala-157, Gly-165, Val-167, Asp-196, Gly-197, Ala-198, Asn-225, and Tyr-227 each coordinate pyruvate. The thiamine diphosphate site is built by Tyr-118 and Arg-119. Thiamine diphosphate contacts are provided by Gly-165, Val-167, Asp-196, Gly-197, Ala-198, and Asn-225. Residue Asp-196 participates in Mg(2+) binding. Residues Asn-225 and Tyr-227 each contribute to the Mg(2+) site. Position 232 is a phosphoserine; by PDK1 (Ser-232). At Lys-244 the chain carries N6-acetyllysine; alternate. Residue Lys-244 is modified to N6-succinyllysine; alternate. Lys-277 carries the N6-succinyllysine modification. His-292 serves as a coordination point for thiamine diphosphate. Ser-293 carries the phosphoserine; by PDK1, PDK2, PDK3 and PDK4 modification. The residue at position 295 (Ser-295) is a Phosphoserine. Ser-300 carries the post-translational modification Phosphoserine; by PDK1, PDK2, PDK3 and PDK4. Tyr-301 bears the Phosphotyrosine mark. Lys-313 bears the N6-acetyllysine; alternate mark. At Lys-313 the chain carries N6-succinyllysine; alternate. 2 positions are modified to N6-acetyllysine: Lys-321 and Lys-336. Residue Lys-385 is modified to N6-succinyllysine.

As to quaternary structure, heterotetramer of two PDHA1 and two PDHB subunits. The heterotetramer interacts with DLAT, and is part of the multimeric pyruvate dehydrogenase complex that contains multiple copies of pyruvate dehydrogenase (E1), dihydrolipoamide acetyltransferase (DLAT, E2) and lipoamide dehydrogenase (DLD, E3). These subunits are bound to an inner core composed of about 48 DLAT and 12 PDHX molecules. Thiamine diphosphate is required as a cofactor. Mg(2+) serves as cofactor. Phosphorylation at Ser-232, Ser-293 and Ser-300 by PDK family kinases inactivates the enzyme; for this phosphorylation at a single site is sufficient. Dephosphorylation at all three sites, i.e. at Ser-232, Ser-293 and Ser-300, is required for reactivation. In terms of processing, acetylation alters the phosphorylation pattern. Deacetylated by SIRT3. As to expression, ubiquitous.

The protein localises to the mitochondrion matrix. The enzyme catalyses N(6)-[(R)-lipoyl]-L-lysyl-[protein] + pyruvate + H(+) = N(6)-[(R)-S(8)-acetyldihydrolipoyl]-L-lysyl-[protein] + CO2. Pyruvate dehydrogenase activity is inhibited by phosphorylation of PDHA1; it is reactivated by dephosphorylation. Its function is as follows. The pyruvate dehydrogenase complex catalyzes the overall conversion of pyruvate to acetyl-CoA and CO(2), and thereby links the glycolytic pathway to the tricarboxylic cycle. The sequence is that of Pyruvate dehydrogenase E1 component subunit alpha, somatic form, mitochondrial (PDHA1) from Homo sapiens (Human).